We begin with the raw amino-acid sequence, 918 residues long: Protein SEY1 homolog (918 aa).

Residues 1–701 (MESSNHLPNK…AGTSVSSWRN (701 aa)) are Cytoplasmic-facing. In terms of domain architecture, GB1/RHD3-type G spans 46 to 280 (GFKFNVVTIL…VPSDGFFVYS (235 aa)). Position 56–63 (56–63 (GSQSSGKS)) interacts with GTP. Residues 554-626 (SLVLLLKATQ…DALTLLQVLK (73 aa)) are a coiled coil. A helical transmembrane segment spans residues 702 to 722 (IPPVFWLVLLVLGWNELRAAF). The Lumenal portion of the chain corresponds to 723 to 725 (RVL). The chain crosses the membrane as a helical span at residues 726–746 (LKFYILIPLLIVSYFTFSYSA). At 747 to 918 (NKLLGPKANE…CGKAVHLAQW (172 aa)) the chain is on the cytoplasmic side.

The protein belongs to the TRAFAC class dynamin-like GTPase superfamily. GB1/RHD3 GTPase family. RHD3 subfamily.

It is found in the endoplasmic reticulum membrane. Its function is as follows. Probable GTP-binding protein that may be involved in cell development. The protein is Protein SEY1 homolog of Theileria annulata.